The primary structure comprises 414 residues: Mannan endo-1,4-beta-mannosidase 2 (414 aa).

The signal sequence occupies residues 1–25 (MAYFQRLISCIFVLFLLSLAFACEA). Substrate is bound by residues tryptophan 95 and asparagine 210. Glutamate 211 acts as the Proton donor in catalysis. Tyrosine 288 contributes to the substrate binding site. The Nucleophile role is filled by glutamate 328. Tryptophan 370 serves as a coordination point for substrate.

It belongs to the glycosyl hydrolase 5 (cellulase A) family.

Its subcellular location is the secreted. The enzyme catalyses Random hydrolysis of (1-&gt;4)-beta-D-mannosidic linkages in mannans, galactomannans and glucomannans.. Possesses endo-beta-mannanase activity in vitro. May be involved in seed germination by weakening the endosperm cap prior to radicle emergence. This Solanum lycopersicum (Tomato) protein is Mannan endo-1,4-beta-mannosidase 2 (MAN2).